Consider the following 308-residue polypeptide: Ribonuclease Z (308 aa).

Residues histidine 60, histidine 62, aspartate 64, histidine 65, histidine 140, aspartate 209, and histidine 269 each coordinate Zn(2+). The active-site Proton acceptor is aspartate 64.

This sequence belongs to the RNase Z family. In terms of assembly, homodimer. Zn(2+) serves as cofactor.

It carries out the reaction Endonucleolytic cleavage of RNA, removing extra 3' nucleotides from tRNA precursor, generating 3' termini of tRNAs. A 3'-hydroxy group is left at the tRNA terminus and a 5'-phosphoryl group is left at the trailer molecule.. Its function is as follows. Zinc phosphodiesterase, which displays some tRNA 3'-processing endonuclease activity. Probably involved in tRNA maturation, by removing a 3'-trailer from precursor tRNA. The sequence is that of Ribonuclease Z from Methanococcus maripaludis (strain C6 / ATCC BAA-1332).